The sequence spans 1075 residues: DNA-directed RNA polymerase subunit beta (1075 aa).

It belongs to the RNA polymerase beta chain family. As to quaternary structure, in plastids the minimal PEP RNA polymerase catalytic core is composed of four subunits: alpha, beta, beta', and beta''. When a (nuclear-encoded) sigma factor is associated with the core the holoenzyme is formed, which can initiate transcription.

The protein resides in the plastid. Its subcellular location is the chloroplast. The enzyme catalyses RNA(n) + a ribonucleoside 5'-triphosphate = RNA(n+1) + diphosphate. DNA-dependent RNA polymerase catalyzes the transcription of DNA into RNA using the four ribonucleoside triphosphates as substrates. This chain is DNA-directed RNA polymerase subunit beta, found in Pinus thunbergii (Japanese black pine).